The chain runs to 240 residues: Phosphatidylserine decarboxylase proenzyme (240 aa).

Catalysis depends on Ser209, which acts as the Schiff-base intermediate with substrate; via pyruvic acid. Ser209 carries the post-translational modification Pyruvic acid (Ser); by autocatalysis.

Belongs to the phosphatidylserine decarboxylase family. PSD-A subfamily. In terms of assembly, heterodimer of a large membrane-associated beta subunit and a small pyruvoyl-containing alpha subunit. Pyruvate serves as cofactor. In terms of processing, is synthesized initially as an inactive proenzyme. Formation of the active enzyme involves a self-maturation process in which the active site pyruvoyl group is generated from an internal serine residue via an autocatalytic post-translational modification. Two non-identical subunits are generated from the proenzyme in this reaction, and the pyruvate is formed at the N-terminus of the alpha chain, which is derived from the carboxyl end of the proenzyme. The post-translation cleavage follows an unusual pathway, termed non-hydrolytic serinolysis, in which the side chain hydroxyl group of the serine supplies its oxygen atom to form the C-terminus of the beta chain, while the remainder of the serine residue undergoes an oxidative deamination to produce ammonia and the pyruvoyl prosthetic group on the alpha chain.

Its subcellular location is the cell membrane. The enzyme catalyses a 1,2-diacyl-sn-glycero-3-phospho-L-serine + H(+) = a 1,2-diacyl-sn-glycero-3-phosphoethanolamine + CO2. The protein operates within phospholipid metabolism; phosphatidylethanolamine biosynthesis; phosphatidylethanolamine from CDP-diacylglycerol: step 2/2. Its function is as follows. Catalyzes the formation of phosphatidylethanolamine (PtdEtn) from phosphatidylserine (PtdSer). This Mycobacterium ulcerans (strain Agy99) protein is Phosphatidylserine decarboxylase proenzyme.